The chain runs to 397 residues: L-asparaginase-like protein GM15681 (397 aa).

The first 22 residues, 1-22 (MLAQSCCLRLLILLLLFTSICS), serve as a signal peptide directing secretion. 3 disulfides stabilise this stretch: C90-C95, C189-C205, and C344-C371.

Belongs to the Ntn-hydrolase family.

The sequence is that of L-asparaginase-like protein GM15681 from Drosophila sechellia (Fruit fly).